Here is a 347-residue protein sequence, read N- to C-terminus: DNA-directed RNA polymerase subunit alpha (347 aa).

An alpha N-terminal domain (alpha-NTD) region spans residues 1–226 (MLISQRPTLS…ELFGLARELN (226 aa)). Residues 243 to 347 (HIASFALPID…SQDYAETEQL (105 aa)) are alpha C-terminal domain (alpha-CTD). The tract at residues 326-347 (TTGTWSTDGAYDSQDYAETEQL) is disordered.

Belongs to the RNA polymerase alpha chain family. As to quaternary structure, homodimer. The RNAP catalytic core consists of 2 alpha, 1 beta, 1 beta' and 1 omega subunit. When a sigma factor is associated with the core the holoenzyme is formed, which can initiate transcription.

The enzyme catalyses RNA(n) + a ribonucleoside 5'-triphosphate = RNA(n+1) + diphosphate. Functionally, DNA-dependent RNA polymerase catalyzes the transcription of DNA into RNA using the four ribonucleoside triphosphates as substrates. In Mycobacterium leprae (strain TN), this protein is DNA-directed RNA polymerase subunit alpha.